The chain runs to 550 residues: Spermatogenesis-associated protein 2 (550 aa).

The PUB domain occupies threonine 83–alanine 156. Residues tyrosine 320–glycine 337 carry the PIM motif motif. Residues serine 457 to glycine 480 are disordered.

It belongs to the SPATA2 family.

Its subcellular location is the cytoplasm. It localises to the nucleus. Functionally, bridging factor that mediates the recruitment of cyld to the LUBAC complex, thereby regulating TNF-alpha-induced necroptosis. Required to activate the 'Met-1'- (linear) and 'Lys-63'-linked deubiquitinase activities of cyld. The protein is Spermatogenesis-associated protein 2 of Danio rerio (Zebrafish).